A 451-amino-acid chain; its full sequence is uncharacterized protein (451 aa).

The tract at residues 1–451 (MSETENKTTT…KKEAAKNKSK (451 aa)) is disordered. Positions 9 to 22 (TTETPTTTDSTVTT) are enriched in low complexity. Residues 44-54 (VKNQLSNTRTR) are compositionally biased toward polar residues. A compositionally biased stretch (basic and acidic residues) spans 73–99 (KLIDTKERKEKKEKKEKEPKEPKEPKE). Acidic residues predominate over residues 114–147 (GDEEEDEEKEEDEEQKEEQSQEEDSEESEEEQNS). Over residues 152–162 (KKKKKQAKKVA) the composition is skewed to basic residues. Basic and acidic residues-rich tracts occupy residues 163–192 (KKET…EKEA), 199–210 (STEKKEKEEKPK), and 217–230 (KKDQ…KDGD). A compositionally biased stretch (low complexity) spans 232-244 (STTTTATATTTTD). Basic and acidic residues-rich tracts occupy residues 284–303 (TEEK…ETKK) and 311–340 (AAAE…DDKP). A compositionally biased stretch (low complexity) spans 341–355 (AATTTTTTAAAATTT). Over residues 356 to 383 (EEPKEKITKPAADKKKAPANKKAEKDQS) the composition is skewed to basic and acidic residues. Over residues 393–425 (TTTATTTTTNKDATAPTTTTNKDATAPTTTTTK) the composition is skewed to low complexity. Over residues 441-451 (PKKEAAKNKSK) the composition is skewed to basic and acidic residues.

This is an uncharacterized protein from Dictyostelium discoideum (Social amoeba).